Here is an 80-residue protein sequence, read N- to C-terminus: Large ribosomal subunit protein bL31 (80 aa).

The protein belongs to the bacterial ribosomal protein bL31 family. Type A subfamily. In terms of assembly, part of the 50S ribosomal subunit.

In terms of biological role, binds the 23S rRNA. In Nostoc punctiforme (strain ATCC 29133 / PCC 73102), this protein is Large ribosomal subunit protein bL31.